Here is a 737-residue protein sequence, read N- to C-terminus: Cilium assembly protein DZIP1L (737 aa).

The tract at residues 1-293 is interaction with Rab8; it reads MGFKGKYPQM…LKQSNEQFIQ (293 aa). Residues 98 to 132 are a coiled coil; that stretch reads VTDLKEAHTTAQEEIATLRKSLSESNNEVVQLHKR. The C2H2-type zinc finger occupies 144 to 167; the sequence is YPCHLCTKNFISNEALNVHIGRKH. Disordered stretches follow at residues 167–187, 214–267, 415–548, 624–682, and 698–737; these read HRVA…DRDK, ERNI…KEQL, SEFL…RKDA, KSPL…VSRD, and IRGA…DNLK. Composition is skewed to basic and acidic residues over residues 244–266 and 415–438; these read EPKE…RKEQ and SEFL…KGSE. Polar residues predominate over residues 457 to 469; it reads SAGSSDSNPTYTK. A compositionally biased stretch (acidic residues) spans 492–510; it reads SQEETENEEERSLTEEEGT. The span at 665-677 shows a compositional bias: polar residues; it reads SSEQQTRSPSPQR. Positions 724-737 are enriched in basic and acidic residues; it reads EDGKSFNDSDDNLK.

It belongs to the DZIP C2H2-type zinc-finger protein family. In terms of assembly, component of a ciliary transition zone (TZ)-localized complex composed of DZIP1, Fam92 and Cby. Interacts directly with Cby. Interacts with Cep290 (via N-terminus). Interacts (via N-terminus) with Rab8. In terms of tissue distribution, in neurons of the second and third antennal segments, expressed at the tip of the dendrites.

The protein localises to the cytoplasm. It is found in the cytoskeleton. It localises to the microtubule organizing center. Its subcellular location is the centrosome. The protein resides in the centriole. The protein localises to the cilium basal body. Its function is as follows. Component of the DZIP1-Fam92-Cby complex which promotes ciliogenesis in sensory neurons and spermatocytes by acting downstream of Cep290 to initiate early ciliary membrane formation and thus transition zone (TZ) assembly. During spermatogenesis, also regulates distal elongation of the basal-body and their docking (anchoring) to the plasma membrane and as a consequence, regulates the initiation and proper elongation of axonemal microtubules. Within the complex, required to recruit or stabilize Rab8, Fam92 and Cby at the distal basal body of cilia to promote early ciliary membrane formation and initiate TZ assembly. Also acts with Fam92 to restrict Cep290 localization to the proximal part of the TZ. May also be involved in recruitment or stabilization of Mks1 at the TZ. The chain is Cilium assembly protein DZIP1L from Drosophila melanogaster (Fruit fly).